The sequence spans 95 residues: Aspartyl/glutamyl-tRNA(Asn/Gln) amidotransferase subunit C (95 aa).

It belongs to the GatC family. As to quaternary structure, heterotrimer of A, B and C subunits.

It catalyses the reaction L-glutamyl-tRNA(Gln) + L-glutamine + ATP + H2O = L-glutaminyl-tRNA(Gln) + L-glutamate + ADP + phosphate + H(+). The catalysed reaction is L-aspartyl-tRNA(Asn) + L-glutamine + ATP + H2O = L-asparaginyl-tRNA(Asn) + L-glutamate + ADP + phosphate + 2 H(+). Its function is as follows. Allows the formation of correctly charged Asn-tRNA(Asn) or Gln-tRNA(Gln) through the transamidation of misacylated Asp-tRNA(Asn) or Glu-tRNA(Gln) in organisms which lack either or both of asparaginyl-tRNA or glutaminyl-tRNA synthetases. The reaction takes place in the presence of glutamine and ATP through an activated phospho-Asp-tRNA(Asn) or phospho-Glu-tRNA(Gln). This chain is Aspartyl/glutamyl-tRNA(Asn/Gln) amidotransferase subunit C, found in Methylocella silvestris (strain DSM 15510 / CIP 108128 / LMG 27833 / NCIMB 13906 / BL2).